We begin with the raw amino-acid sequence, 122 residues long: MVSTSSPTARACAKYVRMSPHKVRRVLDQLRGRTYRDALIMLRFMPYRACEPITKVLRSAAANATHNLGLDPATLVISQAYADQGPCLKRFRPRAQGRAYQIRKPTCHITIAVAPQNTADES.

Belongs to the universal ribosomal protein uL22 family. As to quaternary structure, part of the 50S ribosomal subunit.

Functionally, this protein binds specifically to 23S rRNA; its binding is stimulated by other ribosomal proteins, e.g. L4, L17, and L20. It is important during the early stages of 50S assembly. It makes multiple contacts with different domains of the 23S rRNA in the assembled 50S subunit and ribosome. In terms of biological role, the globular domain of the protein is located near the polypeptide exit tunnel on the outside of the subunit, while an extended beta-hairpin is found that lines the wall of the exit tunnel in the center of the 70S ribosome. The sequence is that of Large ribosomal subunit protein uL22 from Thermosynechococcus vestitus (strain NIES-2133 / IAM M-273 / BP-1).